Reading from the N-terminus, the 310-residue chain is Bis(hydroxyethyl) terephthalate hydrolase (310 aa).

The segment at residues 1–48 (MQQNPHTHAAPGAARPVLRGVRRRLAAVTAAVAAVLVLGTLTGPGAQA) is a signal peptide (tat-type signal). Position 111 (Phe111) interacts with bis(2-hydroxyethyl) terephthalate. Residue Ser179 is the Nucleophile of the active site. The bis(2-hydroxyethyl) terephthalate site is built by Met180 and Trp204. Residues Asp225 and His257 each act as charge relay system in the active site. Residues Cys290 and Cys306 are joined by a disulfide bond.

Belongs to the AB hydrolase superfamily. Predicted to be exported by the Tat system. The position of the signal peptide cleavage has not been experimentally proven.

It is found in the secreted. It carries out the reaction bis(2-hydroxyethyl) terephthalate + H2O = 4-[(2-hydroxyethoxy)carbonyl]benzoate + ethylene glycol + H(+). Functionally, catalyzes the degradation of bis(hydroxyethyl) terephthalate (BHET), a derived-oligomer of the plastic poly(ethylene terephthalate) (PET), hydrolyzing BHET to mono(2-hydroxyethyl) terephthalate (MHET). Shows no activity against PET. The protein is Bis(hydroxyethyl) terephthalate hydrolase of Streptomyces coelicolor (strain ATCC BAA-471 / A3(2) / M145).